A 190-amino-acid chain; its full sequence is Transmembrane protein 11, mitochondrial (190 aa).

A run of 2 helical transmembrane segments spans residues 84–100 (VLAG…LPLD) and 107–124 (LPAG…GISW).

This sequence belongs to the TMEM11 family. Associates with the mitochondrial contact site and cristae organizing system (MICOS) complex, composed of at least MICOS10/MIC10, CHCHD3/MIC19, CHCHD6/MIC25, APOOL/MIC27, IMMT/MIC60, APOO/MIC23/MIC26 and QIL1/MIC13. This complex was also known under the names MINOS or MitOS complex. The MICOS complex associates with mitochondrial outer membrane proteins SAMM50, MTX1, MTX2 and DNAJC11, mitochondrial inner membrane protein TMEM11 and with HSPA9. Interacts with IMMT/MIC60.

The protein localises to the mitochondrion inner membrane. Functionally, plays a role in mitochondrial morphogenesis. In Mus musculus (Mouse), this protein is Transmembrane protein 11, mitochondrial (Tmem11).